The primary structure comprises 318 residues: Olfactory receptor 56A1 (318 aa).

Residues 1–32 (MIQPMASPSNSSTVPVSEFLLICFPNFQSWQH) lie on the Extracellular side of the membrane. Asparagine 10 carries N-linked (GlcNAc...) asparagine glycosylation. A helical transmembrane segment spans residues 33–53 (WLSLPLSLLFLLAMGANTTLL). Residues 54 to 61 (ITIQLEAS) lie on the Cytoplasmic side of the membrane. The helical transmembrane segment at 62–82 (LHQPLYYLLSLLSLLDIVLCL) threads the bilayer. At 83–106 (TVIPKVLAIFWYDLRSISFPACFL) the chain is on the extracellular side. Cysteine 104 and cysteine 196 form a disulfide bridge. The helical transmembrane segment at 107-127 (QMFIMNSFLPMESCTFMVMAY) threads the bilayer. The Cytoplasmic segment spans residues 128–146 (DRYVAICHPLRYPSIITNQ). The helical transmembrane segment at 147–167 (FVAKASVFIVVRNALLTAPIP) threads the bilayer. The Extracellular portion of the chain corresponds to 168–203 (ILTSLLHYCGENVIENCICANLSVSRLSCDNFTLNR). Asparagine 188 and asparagine 198 each carry an N-linked (GlcNAc...) asparagine glycan. Residues 204–224 (IYQFVAGWTLLGSDLFLIFLS) form a helical membrane-spanning segment. Residues 225–244 (YTFILRAVLRFKAEGAAVKA) are Cytoplasmic-facing. A helical transmembrane segment spans residues 245–265 (LSTCGSHFILILFFSTILLVV). At 266–280 (VLTNVARKKVPMDIL) the chain is on the extracellular side. The chain crosses the membrane as a helical span at residues 281–301 (ILLNVLHHLIPPALNPIVYGV). Topologically, residues 302–318 (RTKEIKQGIQKLLQRGR) are cytoplasmic.

The protein belongs to the G-protein coupled receptor 1 family.

Its subcellular location is the cell membrane. In terms of biological role, odorant receptor. The chain is Olfactory receptor 56A1 (OR56A1) from Homo sapiens (Human).